The following is a 183-amino-acid chain: Acyl-homoserine-lactone synthase (183 aa).

It belongs to the autoinducer synthase family.

The enzyme catalyses a fatty acyl-[ACP] + S-adenosyl-L-methionine = an N-acyl-L-homoserine lactone + S-methyl-5'-thioadenosine + holo-[ACP] + H(+). Functionally, involved in the synthesis of the acyl-homoserine lactone (AHL) signal N-(3-hydroxydodecanoyl)-L-HSL (3-hydroxy-C(12)-HSL or OH-dDHL). Probably part of a quorum-sensing system with AnoR. The sequence is that of Acyl-homoserine-lactone synthase from Acinetobacter nosocomialis.